The primary structure comprises 275 residues: MSDLQKTIIEDLHVEPEIDPKQEIRTRVDFLKSYLKKHTFSTGYVLGMSGGQDSTLLSKLTQIAVNELNEENSTNTYQFIGMKLPYGVQKDADDVDDAIKFVEPSKVLTVNIKESVDASVKALDGAGVEISDFLKGNEKARERMKAQYSVAGAFNCFVLGTDHAAEAVTGFYTKHGDGACDLAPLFGLNKRQGKQMLVALNCPEHLYNKKPTADLEDDRPALPDEEALGVTYEQIDEFLEGKEVAEDSKRTIEGHYLKTMHKREGEVTLYDQWWK.

47–54 (GMSGGQDS) serves as a coordination point for ATP. Residue D53 coordinates Mg(2+). Residue R141 coordinates deamido-NAD(+). Residue T161 participates in ATP binding. E166 lines the Mg(2+) pocket. Deamido-NAD(+) is bound by residues K174 and D181. Positions 190 and 212 each coordinate ATP. 261–262 (HK) provides a ligand contact to deamido-NAD(+).

Belongs to the NAD synthetase family. In terms of assembly, homodimer.

The catalysed reaction is deamido-NAD(+) + NH4(+) + ATP = AMP + diphosphate + NAD(+) + H(+). The protein operates within cofactor biosynthesis; NAD(+) biosynthesis; NAD(+) from deamido-NAD(+) (ammonia route): step 1/1. Its function is as follows. Catalyzes the ATP-dependent amidation of deamido-NAD to form NAD. Uses ammonia as a nitrogen source. The protein is NH(3)-dependent NAD(+) synthetase of Oceanobacillus iheyensis (strain DSM 14371 / CIP 107618 / JCM 11309 / KCTC 3954 / HTE831).